Consider the following 348-residue polypeptide: Erlin-1 (348 aa).

Over 1–7 (MNMTQAR) the chain is Cytoplasmic. A helical membrane pass occupies residues 8 to 28 (VLVAAVVGLVAVLLYASIHKI). Topologically, residues 29–348 (EEGHLAVYYR…NVIQNKESTG (320 aa)) are lumenal. Asn-108 is a glycosylation site (N-linked (GlcNAc...) asparagine). An N6-acetyllysine modification is found at Lys-269. A disordered region spans residues 325-348 (SSLPSKEALEPSGENVIQNKESTG). Residues 339–348 (NVIQNKESTG) are compositionally biased toward polar residues.

It belongs to the band 7/mec-2 family. In terms of assembly, forms a heteromeric complex with ERLIN2. In complex with ERLIN2, interacts with RNF170. Interacts with AMFR and SYVN1. In terms of processing, deubiquitinated by USP25; leading to stabilization. In terms of tissue distribution, expressed in heart, placenta, liver, kidney, pancreas, prostate, testis, ovary and small intestine.

It localises to the endoplasmic reticulum membrane. Component of the ERLIN1/ERLIN2 complex which mediates the endoplasmic reticulum-associated degradation (ERAD) of inositol 1,4,5-trisphosphate receptors (IP3Rs). Involved in regulation of cellular cholesterol homeostasis by regulation the SREBP signaling pathway. Binds cholesterol and may promote ER retention of the SCAP-SREBF complex. Its function is as follows. (Microbial infection) Required early in hepatitis C virus (HCV) infection to initiate RNA replication, and later in the infection to support infectious virus production. The polypeptide is Erlin-1 (Homo sapiens (Human)).